The following is a 194-amino-acid chain: uncharacterized protein (194 aa).

Disordered stretches follow at residues 1–21 (MPKG…APPL) and 73–97 (PATV…PWPS). The span at 73 to 96 (PATVPPPPPGLGPPSERPCPPPWP) shows a compositional bias: pro residues.

This is an uncharacterized protein from Mus musculus (Mouse).